Reading from the N-terminus, the 176-residue chain is Nucleoside triphosphate/diphosphate phosphatase (176 aa).

Residue Arg23 is the Proton donor of the active site. The Mg(2+) site is built by Asn87, Asp103, Asp105, Asp107, Asp120, and Glu123.

The protein belongs to the Ntdp family. The cofactor is Mg(2+).

It carries out the reaction a ribonucleoside 5'-triphosphate + H2O = a ribonucleoside 5'-diphosphate + phosphate + H(+). The enzyme catalyses a ribonucleoside 5'-diphosphate + H2O = a ribonucleoside 5'-phosphate + phosphate + H(+). Has nucleoside phosphatase activity towards nucleoside triphosphates and nucleoside diphosphates. The chain is Nucleoside triphosphate/diphosphate phosphatase from Bacillus licheniformis (strain ATCC 14580 / DSM 13 / JCM 2505 / CCUG 7422 / NBRC 12200 / NCIMB 9375 / NCTC 10341 / NRRL NRS-1264 / Gibson 46).